The primary structure comprises 795 residues: Levansucrase (795 aa).

A signal peptide spans 1–36 (METKVRKKMYKKGKFWVVATITTAMLTGIGLSSVQA). Composition is skewed to polar residues over residues 42 to 66 (TQVSSELAERSQVQENTTASSSAAE) and 112 to 130 (QAATVTKTSASTPEVGQTN). 2 disordered regions span residues 42–83 (TQVS…NPAA) and 103–138 (ESKASKTKDQAATVTKTSASTPEVGQTNEKAKATKE). Sucrose is bound by residues W245, D246, and S315. D246 serves as the catalytic Nucleophile. Residue D394 coordinates Ca(2+). Residues R399 and D400 each contribute to the sucrose site. Ca(2+)-binding residues include Q425, N464, and D496. E497 serves as a coordination point for sucrose. The Proton donor/acceptor role is filled by E499. Residue R517 participates in sucrose binding. Residues 774–794 (GNSFFAALLALFSAFCVSIGF) form a helical membrane-spanning segment.

This sequence belongs to the glycosyl hydrolase 68 family.

It localises to the cell membrane. The protein localises to the cell surface. The catalysed reaction is [6)-beta-D-fructofuranosyl-(2-&gt;](n) alpha-D-glucopyranoside + sucrose = [6)-beta-D-fructofuranosyl-(2-&gt;](n+1) alpha-D-glucopyranoside + D-glucose. With respect to regulation, ca(2+) may play an important structural role and promote stability of levansucrase. In terms of biological role, catalyzes the synthesis of levan, a fructose polymer, by transferring the fructosyl moiety from sucrose to a growing acceptor molecule. Also displays sucrose hydrolase activity. The protein is Levansucrase of Streptococcus mutans serotype c (strain ATCC 700610 / UA159).